The primary structure comprises 593 residues: Tyrosine-protein phosphatase non-receptor type 11 (593 aa).

SH2 domains follow at residues 6–102 (WFHP…KYPL) and 112–216 (WFHG…KQPL). In terms of domain architecture, Tyrosine-protein phosphatase spans 247–521 (FWEEFETLQQ…RFIYMAVQHY (275 aa)). Substrate is bound by residues Asp425, 459–465 (CSAGIGR), and Gln506. Cys459 acts as the Phosphocysteine intermediate in catalysis. A compositionally biased stretch (polar residues) spans 548–557 (SLSDQTSGDQ). Residues 548–575 (SLSDQTSGDQSPLPPCTPTPTCPEMRED) are disordered. Positions 559 to 568 (PLPPCTPTPT) are enriched in pro residues.

It belongs to the protein-tyrosine phosphatase family. Non-receptor class 2 subfamily. Post-translationally, phosphorylated by tyrosine-protein kinases. In terms of tissue distribution, expressed in embryonic fibroblast, hematopoietic, erythroid, myeloid and lymphoid cells.

Its subcellular location is the cytoplasm. It carries out the reaction O-phospho-L-tyrosyl-[protein] + H2O = L-tyrosyl-[protein] + phosphate. In terms of biological role, this PTPase activity may directly link growth factor receptors and other signaling proteins through protein-tyrosine phosphorylation. The SH2 regions may interact with other cellular components to modulate its own phosphatase activity against interacting substrates. May play a positive role during the stages of erythroid cell proliferation. The polypeptide is Tyrosine-protein phosphatase non-receptor type 11 (PTPN11) (Gallus gallus (Chicken)).